A 511-amino-acid polypeptide reads, in one-letter code: Glucose-6-phosphate 1-dehydrogenase, cytoplasmic isoform (511 aa).

Residues 36–43 (GASGDLAK), arginine 71, tyrosine 151, and lysine 178 each bind NADP(+). D-glucose 6-phosphate contacts are provided by residues lysine 178, 208-212 (HYLGK), glutamate 246, and aspartate 265. Histidine 270 serves as the catalytic Proton acceptor. Residue lysine 353 coordinates NADP(+). Lysine 356 and arginine 361 together coordinate D-glucose 6-phosphate. Residues lysine 362, arginine 366, and arginine 390 each coordinate NADP(+). Position 392 (glutamine 392) interacts with D-glucose 6-phosphate. Residues 398–400 (YMK), 418–420 (DLS), arginine 484, and tryptophan 506 contribute to the NADP(+) site.

The protein belongs to the glucose-6-phosphate dehydrogenase family. Homotetramer. As to expression, found in tubers, stolons, roots, and flower buds.

It localises to the cytoplasm. The catalysed reaction is D-glucose 6-phosphate + NADP(+) = 6-phospho-D-glucono-1,5-lactone + NADPH + H(+). It functions in the pathway carbohydrate degradation; pentose phosphate pathway; D-ribulose 5-phosphate from D-glucose 6-phosphate (oxidative stage): step 1/3. Regulated by metabolites. Functionally, catalyzes the rate-limiting step of the oxidative pentose-phosphate pathway, which represents a route for the dissimilation of carbohydrates besides glycolysis. The main function of this enzyme is to generate NADPH for reductive biosyntheses. In Solanum tuberosum (Potato), this protein is Glucose-6-phosphate 1-dehydrogenase, cytoplasmic isoform (G6PDH).